A 201-amino-acid chain; its full sequence is Small ribosomal subunit protein uS4c (201 aa).

Positions methionine 89–leucine 152 constitute an S4 RNA-binding domain.

The protein belongs to the universal ribosomal protein uS4 family. Part of the 30S ribosomal subunit. Contacts protein S5. The interaction surface between S4 and S5 is involved in control of translational fidelity.

It is found in the plastid. Its subcellular location is the chloroplast. Its function is as follows. One of the primary rRNA binding proteins, it binds directly to 16S rRNA where it nucleates assembly of the body of the 30S subunit. In terms of biological role, with S5 and S12 plays an important role in translational accuracy. In Arabidopsis thaliana (Mouse-ear cress), this protein is Small ribosomal subunit protein uS4c (rps4).